Here is a 265-residue protein sequence, read N- to C-terminus: Proteasome subunit alpha (265 aa).

A disordered region spans residues 236-265; the sequence is EKDSKGSKGAQNPKGARDSKNSKSYGESTD.

Belongs to the peptidase T1A family. As to quaternary structure, the 20S proteasome core is composed of 14 alpha and 14 beta subunits that assemble into four stacked heptameric rings, resulting in a barrel-shaped structure. The two inner rings, each composed of seven catalytic beta subunits, are sandwiched by two outer rings, each composed of seven alpha subunits. The catalytic chamber with the active sites is on the inside of the barrel. Has a gated structure, the ends of the cylinder being occluded by the N-termini of the alpha-subunits. Is capped by the proteasome-associated ATPase, ARC.

Its subcellular location is the cytoplasm. The protein operates within protein degradation; proteasomal Pup-dependent pathway. Its activity is regulated as follows. The formation of the proteasomal ATPase ARC-20S proteasome complex, likely via the docking of the C-termini of ARC into the intersubunit pockets in the alpha-rings, may trigger opening of the gate for substrate entry. Interconversion between the open-gate and close-gate conformations leads to a dynamic regulation of the 20S proteasome proteolysis activity. Component of the proteasome core, a large protease complex with broad specificity involved in protein degradation. This is Proteasome subunit alpha from Mycobacterium leprae (strain Br4923).